A 294-amino-acid chain; its full sequence is HTH-type transcriptional regulator XapR (294 aa).

Residues 7–64 (TDLKLLRYFLAVAEELHFGRAAARLNMSQPPLSIHIKELENQLGTQLFIRHSRSVVLT) form the HTH lysR-type domain. The H-T-H motif DNA-binding region spans 24 to 43 (FGRAAARLNMSQPPLSIHIK).

This sequence belongs to the LysR transcriptional regulatory family.

Functionally, positive regulator required for the expression of xapA and xapB. Binds to the inducer xanthosine. This chain is HTH-type transcriptional regulator XapR (xapR), found in Escherichia coli (strain K12).